The primary structure comprises 315 residues: MAFLQDGNHTAVTEFILLGLTDDPVLRVVLFTIILCIYLVTVFGNLSTILLIRVSSQLHHPMYFFLSHLASVDIGISSSVTPSMLVNFLLERSTISYLGCGIQLGSADFIASVECFLLAAMAYDRFMAVCNPLLYSTKMSTQVCVQLVVGSYIGGFLNASLIVTVYFFSFLFCGPNRIDHFFCDFAPLAELSCSDVSVSVLIISFSAGSVTMITVFVIVISYSYILITILKMHSTEGRHKAFSTCTSHLTAVTLYYGTITFIYVMPKSSFSTDQNKVVSVFYMVMIPMLNPLIYSLSNNEIKGALKRQLGMKTLS.

Residues 1–28 (MAFLQDGNHTAVTEFILLGLTDDPVLRV) are Extracellular-facing. A glycan (N-linked (GlcNAc...) asparagine) is linked at Asn8. Residues 29–49 (VLFTIILCIYLVTVFGNLSTI) traverse the membrane as a helical segment. The Cytoplasmic portion of the chain corresponds to 50-57 (LLIRVSSQ). A helical transmembrane segment spans residues 58–78 (LHHPMYFFLSHLASVDIGISS). Residues 79–102 (SVTPSMLVNFLLERSTISYLGCGI) lie on the Extracellular side of the membrane. Cys100 and Cys193 are joined by a disulfide. A helical membrane pass occupies residues 103-123 (QLGSADFIASVECFLLAAMAY). The Cytoplasmic segment spans residues 124–136 (DRFMAVCNPLLYS). The helical transmembrane segment at 137-157 (TKMSTQVCVQLVVGSYIGGFL) threads the bilayer. Topologically, residues 158–200 (NASLIVTVYFFSFLFCGPNRIDHFFCDFAPLAELSCSDVSVSV) are extracellular. A helical membrane pass occupies residues 201-221 (LIISFSAGSVTMITVFVIVIS). Residues 222-241 (YSYILITILKMHSTEGRHKA) lie on the Cytoplasmic side of the membrane. A helical transmembrane segment spans residues 242–262 (FSTCTSHLTAVTLYYGTITFI). Residues 263–275 (YVMPKSSFSTDQN) are Extracellular-facing. The helical transmembrane segment at 276–296 (KVVSVFYMVMIPMLNPLIYSL) threads the bilayer. The Cytoplasmic segment spans residues 297 to 315 (SNNEIKGALKRQLGMKTLS).

It belongs to the G-protein coupled receptor 1 family.

The protein localises to the cell membrane. Functionally, potential odorant receptor. The sequence is that of Olfactory receptor 5P59 from Mus musculus (Mouse).